Here is a 220-residue protein sequence, read N- to C-terminus: ATP synthase subunit 5, mitochondrial (220 aa).

The protein belongs to the ATPase delta chain family. In terms of assembly, F-type ATPases have 2 components, CF(1) - the catalytic core - and CF(0) - the membrane proton channel. CF(1) has five subunits: alpha(3), beta(3), gamma(1), delta(1), epsilon(1). CF(0) has three main subunits: a, b and c.

It is found in the mitochondrion. Its subcellular location is the mitochondrion inner membrane. Its function is as follows. Mitochondrial membrane ATP synthase (F(1)F(0) ATP synthase or Complex V) produces ATP from ADP in the presence of a proton gradient across the membrane which is generated by electron transport complexes of the respiratory chain. F-type ATPases consist of two structural domains, F(1) - containing the extramembraneous catalytic core and F(0) - containing the membrane proton channel, linked together by a central stalk and a peripheral stalk. During catalysis, ATP synthesis in the catalytic domain of F(1) is coupled via a rotary mechanism of the central stalk subunits to proton translocation. Part of the complex F(0) domain and the peripheric stalk, which acts as a stator to hold the catalytic alpha(3)beta(3) subcomplex and subunit a/ATP6 static relative to the rotary elements. The protein is ATP synthase subunit 5, mitochondrial (atp-5) of Neurospora crassa (strain ATCC 24698 / 74-OR23-1A / CBS 708.71 / DSM 1257 / FGSC 987).